A 267-amino-acid chain; its full sequence is Eukaryotic translation initiation factor 3 subunit J (267 aa).

Disordered regions lie at residues 1-128 (MAPS…DIDL) and 220-241 (KMRE…KTKV). Residues 28–46 (DEEEEDVLDSWDAAEDSEV) show a composition bias toward acidic residues. Positions 44–96 (SEVEREKAAKAAAAAAKAEAEAAAKKKSKAQRIEEHKQERKKQAEANESDEDS) form a coiled coil. The span at 74 to 88 (QRIEEHKQERKKQAE) shows a compositional bias: basic and acidic residues. Over residues 90-100 (NESDEDSDEDE) the composition is skewed to acidic residues. 2 stretches are compositionally biased toward basic and acidic residues: residues 108-121 (RRTE…HAQD) and 220-231 (KMREERAADKGN).

Belongs to the eIF-3 subunit J family. As to quaternary structure, component of the eukaryotic translation initiation factor 3 (eIF-3) complex.

The protein localises to the cytoplasm. Functionally, component of the eukaryotic translation initiation factor 3 (eIF-3) complex, which is involved in protein synthesis of a specialized repertoire of mRNAs and, together with other initiation factors, stimulates binding of mRNA and methionyl-tRNAi to the 40S ribosome. The eIF-3 complex specifically targets and initiates translation of a subset of mRNAs involved in cell proliferation. This Neosartorya fischeri (strain ATCC 1020 / DSM 3700 / CBS 544.65 / FGSC A1164 / JCM 1740 / NRRL 181 / WB 181) (Aspergillus fischerianus) protein is Eukaryotic translation initiation factor 3 subunit J (hcr1).